The chain runs to 483 residues: 6-phosphogluconate dehydrogenase, decarboxylating (483 aa).

NADP(+)-binding positions include 10 to 15 (GLAVMG) and 33 to 35 (NRT). Residue Lys38 is modified to N6-acetyllysine. Phosphoserine is present on Ser57. Lys59 carries the N6-acetyllysine modification. NADP(+)-binding positions include 75–77 (VKA) and Asn103. Substrate contacts are provided by residues Asn103 and 129-131 (SGG). At Ser129 the chain carries Phosphoserine. Residue Lys184 is the Proton acceptor of the active site. 187 to 188 (HN) is a substrate binding site. Residue Glu191 is the Proton donor of the active site. The substrate site is built by Tyr192, Lys261, Arg288, Arg447, and His453. 478–481 (SSSY) provides a ligand contact to NADP(+).

This sequence belongs to the 6-phosphogluconate dehydrogenase family. As to quaternary structure, homodimer.

It is found in the cytoplasm. The enzyme catalyses 6-phospho-D-gluconate + NADP(+) = D-ribulose 5-phosphate + CO2 + NADPH. Its pathway is carbohydrate degradation; pentose phosphate pathway; D-ribulose 5-phosphate from D-glucose 6-phosphate (oxidative stage): step 3/3. In terms of biological role, catalyzes the oxidative decarboxylation of 6-phosphogluconate to ribulose 5-phosphate and CO(2), with concomitant reduction of NADP to NADPH. The chain is 6-phosphogluconate dehydrogenase, decarboxylating (Pgd) from Mus musculus (Mouse).